The chain runs to 253 residues: Triosephosphate isomerase (253 aa).

9 to 11 is a binding site for substrate; sequence NWK. The Electrophile role is filled by His97. The active-site Proton acceptor is the Glu169. Substrate contacts are provided by residues Gly175, Ser215, and 236–237; that span reads GG.

This sequence belongs to the triosephosphate isomerase family. Homodimer.

It localises to the cytoplasm. The catalysed reaction is D-glyceraldehyde 3-phosphate = dihydroxyacetone phosphate. It participates in carbohydrate biosynthesis; gluconeogenesis. The protein operates within carbohydrate degradation; glycolysis; D-glyceraldehyde 3-phosphate from glycerone phosphate: step 1/1. In terms of biological role, involved in the gluconeogenesis. Catalyzes stereospecifically the conversion of dihydroxyacetone phosphate (DHAP) to D-glyceraldehyde-3-phosphate (G3P). The sequence is that of Triosephosphate isomerase from Staphylococcus aureus (strain NCTC 8325 / PS 47).